Here is a 259-residue protein sequence, read N- to C-terminus: Ribonuclease PH (259 aa).

Residues R88 and 126 to 128 (GTR) contribute to the phosphate site.

This sequence belongs to the RNase PH family. Homohexameric ring arranged as a trimer of dimers.

The enzyme catalyses tRNA(n+1) + phosphate = tRNA(n) + a ribonucleoside 5'-diphosphate. Functionally, phosphorolytic 3'-5' exoribonuclease that plays an important role in tRNA 3'-end maturation. Removes nucleotide residues following the 3'-CCA terminus of tRNAs; can also add nucleotides to the ends of RNA molecules by using nucleoside diphosphates as substrates, but this may not be physiologically important. Probably plays a role in initiation of 16S rRNA degradation (leading to ribosome degradation) during starvation. The sequence is that of Ribonuclease PH from Mycolicibacterium paratuberculosis (strain ATCC BAA-968 / K-10) (Mycobacterium paratuberculosis).